Consider the following 303-residue polypeptide: Aspartate carbamoyltransferase catalytic subunit (303 aa).

Carbamoyl phosphate-binding residues include Arg-49 and Thr-50. Position 77 (Lys-77) interacts with L-aspartate. Residues Arg-99, His-126, and Gln-129 each coordinate carbamoyl phosphate. L-aspartate is bound by residues Arg-159 and Arg-211. Positions 252 and 253 each coordinate carbamoyl phosphate.

It belongs to the aspartate/ornithine carbamoyltransferase superfamily. ATCase family. As to quaternary structure, heterododecamer (2C3:3R2) of six catalytic PyrB chains organized as two trimers (C3), and six regulatory PyrI chains organized as three dimers (R2).

It carries out the reaction carbamoyl phosphate + L-aspartate = N-carbamoyl-L-aspartate + phosphate + H(+). The protein operates within pyrimidine metabolism; UMP biosynthesis via de novo pathway; (S)-dihydroorotate from bicarbonate: step 2/3. Its function is as follows. Catalyzes the condensation of carbamoyl phosphate and aspartate to form carbamoyl aspartate and inorganic phosphate, the committed step in the de novo pyrimidine nucleotide biosynthesis pathway. The chain is Aspartate carbamoyltransferase catalytic subunit from Listeria monocytogenes serotype 4b (strain F2365).